Reading from the N-terminus, the 248-residue chain is MRILLSNDDGVFAQGLAELYKELKEDHEITVIAPDRNCSGASNALSLQQPLRMEQMQSGFYAVNGTPSDCVHVGVNSFLQQDPELVISGINHGANLGDDVIYSGTVAAATEGRYMGLPAIAVSLCAHTSDNFVSAAKFVRRIVTHLQAHPLPADQILNVNIPDLPYGEIKGIKVTRQGRRHRAKTMIKDTDPRGKTIFWYGPVGEEQDAGPGTDFHAISEGFCSVTPLSVDMTAHQSLEDVRQWITKI.

A divalent metal cation is bound by residues Asp-8, Asp-9, Ser-39, and Asn-91.

Belongs to the SurE nucleotidase family. Requires a divalent metal cation as cofactor.

The protein localises to the cytoplasm. It catalyses the reaction a ribonucleoside 5'-phosphate + H2O = a ribonucleoside + phosphate. Nucleotidase that shows phosphatase activity on nucleoside 5'-monophosphates. This chain is 5'-nucleotidase SurE, found in Pseudoalteromonas atlantica (strain T6c / ATCC BAA-1087).